Consider the following 658-residue polypeptide: Transport protein particle subunit trs85-1 (658 aa).

Belongs to the TRS85 family. As to quaternary structure, part of the multisubunit TRAPP (transport protein particle) complexes I and II.

It localises to the golgi apparatus. Its subcellular location is the cis-Golgi network. Component of the TRAPP I and TRAPP II complexes. TRAPP I plays a key role in the late stages of endoplasmic reticulum to Golgi traffic. TRAPP II seems to play a role in intra-Golgi transport. Has a role late in meiosis following DNA replication. This is Transport protein particle subunit trs85-1 (trs85-1) from Schizosaccharomyces pombe (strain 972 / ATCC 24843) (Fission yeast).